Here is a 323-residue protein sequence, read N- to C-terminus: Aldo-keto reductase family 1 member C23-like protein (323 aa).

20–24 serves as a coordination point for NADP(+); that stretch reads GFGTY. A substrate-binding site is contributed by Lys31. Asp50 is an NADP(+) binding site. Catalysis depends on Tyr55, which acts as the Proton donor. Position 117 (His117) interacts with substrate. NADP(+)-binding positions include 166-167, Gln190, 216-222, and 270-280; these read SN, YGALGTQ, and KSYNEKRIKEN.

This sequence belongs to the aldo/keto reductase family. As to quaternary structure, monomer. As to expression, detected in endometrium surface epithelium (at protein level). Detected in endometrium.

The protein localises to the cytoplasm. In terms of biological role, NADP-dependent oxidoreductase involved in steroid metabolism. May act on various hydroxysteroids. This Equus caballus (Horse) protein is Aldo-keto reductase family 1 member C23-like protein (PGFS).